Here is an 873-residue protein sequence, read N- to C-terminus: DNA helicase/primase complex-associated protein (873 aa).

The interval 394 to 422 is disordered; sequence PPLPRDDGDGENNVVEVSSSTGGAHPPSD.

Belongs to the herpesviridae HEPA family. Associates with the primase and the helicase to form the helicase-primase complex. Interacts with the origin-binding protein. Interacts with the polymerase catalytic subunit.

The protein localises to the host nucleus. In terms of biological role, component of the helicase/primase complex. Unwinds the DNA at the replication forks and generates single-stranded DNA for both leading and lagging strand synthesis. The primase synthesizes short RNA primers on the lagging strand that the polymerase presumably elongates using dNTPs. The primase-associated factor has no known catalytic activity in the complex and may serve to facilitate the formation of the replisome by directly interacting with the origin-binding protein and the polymerase. The sequence is that of DNA helicase/primase complex-associated protein (UL102) from Homo sapiens (Human).